Reading from the N-terminus, the 587-residue chain is Lipoprotein LpqB (587 aa).

The signal sequence occupies residues Met1–Gly19. A lipid anchor (N-palmitoyl cysteine) is attached at Cys20. Cys20 carries the S-diacylglycerol cysteine lipid modification.

Belongs to the LpqB lipoprotein family. Interacts with MtrB, probably extracytoplasmically.

It is found in the cell membrane. The protein resides in the secreted. The protein localises to the cell wall. In terms of biological role, may modulate activity of the MtrAB system in controlling homeostasis of the cell wall and cell division. In Mycobacterium tuberculosis (strain CDC 1551 / Oshkosh), this protein is Lipoprotein LpqB.